Here is a 118-residue protein sequence, read N- to C-terminus: MSCQQSQQQCQPPPKCTPKCPPKCPTPKCPPKCPPKCPPVSSCCSVSSGGCCGSSSGGSCGSSSGGCCSSGGGGCCLSHHRRRRSHCHRPQSSGCCSQPSGGSSCCGGGSGQHSGGCC.

The segment covering 1–10 (MSCQQSQQQC) has biased composition (low complexity). Disordered regions lie at residues 1–23 (MSCQ…CPPK) and 87–118 (CHRP…GGCC). Pro residues predominate over residues 11–23 (QPPPKCTPKCPPK). A compositionally biased stretch (low complexity) spans 90–103 (PQSSGCCSQPSGGS). Over residues 104–118 (SCCGGGSGQHSGGCC) the composition is skewed to gly residues.

This sequence belongs to the LCE family. Interacts with CYSRT1. Skin-specific. Expression was readily detected in adult trunk skin, adult arm skin, fetal skin, penal skin, vulva, esophagus and tongue. Not expressed in the cervix, rectum, lung, colon, or placenta.

Precursors of the cornified envelope of the stratum corneum. The chain is Late cornified envelope protein 1C (LCE1C) from Homo sapiens (Human).